The chain runs to 360 residues: Glutamine synthetase (360 aa).

The 80-residue stretch at I26 to G105 folds into the GS beta-grasp domain. The 249-residue stretch at Y112–N360 folds into the GS catalytic domain.

This sequence belongs to the glutamine synthetase family. In terms of assembly, homooctamer.

Its subcellular location is the cytoplasm. The enzyme catalyses L-glutamate + NH4(+) + ATP = L-glutamine + ADP + phosphate + H(+). This Colletotrichum gloeosporioides (Anthracnose fungus) protein is Glutamine synthetase (GLN1).